A 1470-amino-acid polypeptide reads, in one-letter code: Niemann-Pick type C1-related protein (1470 aa).

Over 1–3 (MFV) the chain is Cytoplasmic. The stretch at 4–34 (KNFIHKLKELKQKSLDKFANLLYDYGGYVYD) is an intramembrane region. Position 35 (Arg35) is a topological domain, cytoplasmic. The chain crosses the membrane as a helical span at residues 36–56 (PCTFIICSLICCLLLTCGFYF). Residues 57–493 (KEHEKDIYKL…DEVDRISKID (437 aa)) lie on the Extracellular side of the membrane. Asn78, Asn165, Asn294, and Asn361 each carry an N-linked (GlcNAc...) asparagine glycan. A helical transmembrane segment spans residues 494-514 (NLTRLLLLIGVLLIFMYALFN). The 160-residue stretch at 494 to 653 (NLTRLLLLIG…LTFLLSFLCI (160 aa)) folds into the SSD domain. Topologically, residues 515 to 524 (NVTSVLYRSK) are cytoplasmic. Residues 525–549 (PLCAVMGIFCGFLGFLSGSGFLYFL) form a helical membrane-spanning segment. Residues 550–554 (GVKSV) are Extracellular-facing. Residues 555–582 (PPAETVPFLVIGVGVDDVFVILNSYSLL) traverse the membrane as a helical segment. At 583-587 (FMVKD) the chain is on the cytoplasmic side. The helical transmembrane segment at 588 to 619 (NKKRIQMCLKDSALAITVTTLTNIIAFLISAI) threads the bilayer. At 620 to 622 (SPF) the chain is on the extracellular side. Residues 623-659 (YSICAFSLFTASSLFFGYLMVLTFLLSFLCIEAKLEK) form a helical membrane-spanning segment. Topologically, residues 660 to 663 (KKRN) are cytoplasmic. The stretch at 664 to 673 (IFTGTFHLFR) is an intramembrane region. Residues 674 to 1057 (SIFMKSSKKN…IYEEPKGNIG (384 aa)) lie on the Cytoplasmic side of the membrane. Residues 1058 to 1073 (KYFRSLVKNYYVPFLS) lie within the membrane without spanning it. Position 1074 (Ser1074) is a topological domain, cytoplasmic. Residues 1075–1098 (RFGKTIVYIMFTIIIAMSIYGCTL) form a helical membrane-spanning segment. The Extracellular portion of the chain corresponds to 1099-1300 (MKKGIKYDKA…NHNVQMVCFH (202 aa)). N-linked (GlcNAc...) asparagine glycosylation is present at Asn1218. The chain crosses the membrane as a helical span at residues 1301–1334 (LSSIFNETDESIIEVTLINLGITILTILVVTAYI). At 1335 to 1337 (IKG) the chain is on the cytoplasmic side. A helical membrane pass occupies residues 1338–1361 (FYSCVIIALIIFLIDLCIFGFMCL). The Extracellular segment spans residues 1362 to 1367 (CGITMN). A helical transmembrane segment spans residues 1368 to 1394 (IISMVILVLSVGFSIDHTSHIVQAFSH). Residues 1395 to 1399 (SMGRT) are Cytoplasmic-facing. The helical transmembrane segment at 1400 to 1431 (RDEKMKESLHLMIGPVLHSGLSTWFVISTLFF) threads the bilayer. Over 1432–1434 (SNK) the chain is Extracellular. The helical transmembrane segment at 1435–1466 (DFTVIFFQTLSLVLFFSITFSSMFLPVLLSSF) threads the bilayer. Residues 1467–1470 (GPLH) lie on the Cytoplasmic side of the membrane.

The protein belongs to the patched family.

It localises to the cell membrane. The enzyme catalyses cholesterol(in) = cholesterol(out). Its function is as follows. Facilitates cholesterol efflux from membranes in a pH-dependent manner. Required for maintaining normal parasite plasma membrane lipid composition. Required for the proper functioning of digestive vacuole. Required for the viability of blood-stage parasites. This Plasmodium falciparum (isolate 3D7) protein is Niemann-Pick type C1-related protein.